A 437-amino-acid polypeptide reads, in one-letter code: uncharacterized protein (437 aa).

Composition is skewed to basic residues over residues 1-29 (MDTP…RHRN), 81-91 (LRGRHPRVRRV), and 101-118 (RRRH…GRNR). 2 disordered regions span residues 1-31 (MDTP…RNDH) and 77-437 (EHVP…QGTR). Residues 119 to 132 (HAGDRRAPGVDSRL) show a composition bias toward basic and acidic residues. Basic residues predominate over residues 133-142 (RQQHQHPRGR). The segment covering 143–164 (HASDRVQDGAHPRRQRLREQPR) has biased composition (basic and acidic residues). The segment covering 165–190 (HAGRPRRRQPPRRGRSRGTHRRHLRQ) has biased composition (basic residues). Basic and acidic residues-rich tracts occupy residues 198 to 209 (GPDEDQAREFRG) and 217 to 253 (HPPT…EAGR). Composition is skewed to basic residues over residues 284–293 (TVHRGGRLRG) and 324–348 (PHSR…RVRH). Residues 371–382 (DAAAYASVPAHA) are compositionally biased toward low complexity.

This is an uncharacterized protein from Haloferax lucentense (strain DSM 14919 / JCM 9276 / NCIMB 13854 / Aa 2.2) (Haloferax alicantei).